Here is a 529-residue protein sequence, read N- to C-terminus: UDP-glucuronosyltransferase 2B7 (529 aa).

Positions 1–23 are cleaved as a signal peptide; that stretch reads MSVKWTSVILLIQLSFCFSSGNC. N-linked (GlcNAc...) asparagine glycans are attached at residues Asn67, Asn68, and Asn315. Residues 373 to 379 and Asp398 contribute to the UDP-alpha-D-glucuronate site; that span reads THGGANG. The helical transmembrane segment at 493–509 threads the bilayer; sequence VIGFLLVCVATVIFIVT.

The protein belongs to the UDP-glycosyltransferase family.

It is found in the endoplasmic reticulum membrane. It catalyses the reaction glucuronate acceptor + UDP-alpha-D-glucuronate = acceptor beta-D-glucuronoside + UDP + H(+). The catalysed reaction is 17alpha-estradiol + UDP-alpha-D-glucuronate = 17alpha-estradiol 17-O-(beta-D-glucuronate) + UDP + H(+). It carries out the reaction 17beta-estradiol + UDP-alpha-D-glucuronate = 17beta-estradiol 17-O-(beta-D-glucuronate) + UDP + H(+). The enzyme catalyses 2-hydroxy-17beta-estradiol + UDP-alpha-D-glucuronate = 2-hydroxy-17beta-estradiol 3-O-(beta-D-glucuronate) + UDP + H(+). It catalyses the reaction 4-hydroxy-17beta-estradiol + UDP-alpha-D-glucuronate = 17beta-estradiol 4-O-(beta-D-glucuronate) + UDP + H(+). The catalysed reaction is 4-hydroxyestrone + UDP-alpha-D-glucuronate = estrone 4-O-(beta-D-glucuronate) + UDP + H(+). It carries out the reaction 16alpha-hydroxyestrone + UDP-alpha-D-glucuronate = 16alpha-hydroxyestrone 16-O-(beta-D-glucuronate) + UDP + H(+). The enzyme catalyses 16alpha,17beta-estriol + UDP-alpha-D-glucuronate = 16alpha,17beta-estriol 16-O-(beta-D-glucuronate) + UDP + H(+). It catalyses the reaction 16beta,17beta-estriol + UDP-alpha-D-glucuronate = 16beta,17beta-estriol 16-O-(beta-D-glucuronate) + UDP + H(+). The catalysed reaction is 16alpha,17alpha-estriol + UDP-alpha-D-glucuronate = 16alpha,17alpha-estriol 16-O-(beta-D-glucuronate) + UDP + H(+). It carries out the reaction 16alpha,17alpha-estriol + UDP-alpha-D-glucuronate = 16alpha,17alpha-estriol 17-O-(beta-D-glucuronate) + UDP + H(+). The enzyme catalyses epitestosterone + UDP-alpha-D-glucuronate = epitestosterone 17-O-(beta-D-glucuronate) + UDP + H(+). It catalyses the reaction hyodeoxycholate + UDP-alpha-D-glucuronate = hyodeoxycholate 6-O-(beta-D-glucuronate) + UDP + H(+). The catalysed reaction is hyocholate + UDP-alpha-D-glucuronate = hyocholate 6-O-(beta-D-glucuronate) + UDP + H(+). It carries out the reaction all-trans-retinoate + UDP-alpha-D-glucuronate = all-trans-retinoyl-1-O-(beta-D-glucuronate) + UDP. The enzyme catalyses all-trans-4-hydroxyretinoate + UDP-alpha-D-glucuronate = all-trans-4-hydroxy-4-O-(beta-D-glucuronide)-retinoate + UDP + H(+). It catalyses the reaction (E)-ferulate + UDP-alpha-D-glucuronate = (E)-ferulic acid beta-D-glucuronate ester + UDP. The catalysed reaction is 8-iso-prostaglandin F2alpha + UDP-alpha-D-glucuronate = 8-iso-prostaglandin F2alpha-glucuronide + UDP + H(+). It carries out the reaction 5-epi-5-F2t-IsoP + UDP-alpha-D-glucuronate = 5-epi-5-F2t-IsoP-glucuronide + UDP + H(+). The enzyme catalyses (5Z,8Z,11Z,14Z)-eicosatetraenoate + UDP-alpha-D-glucuronate = O-[(5Z),(8Z),(11Z),(14Z)-eicosatetraenoyl]-beta-D-glucuronate + UDP. It catalyses the reaction 15-hydroxy-(5Z,8Z,11Z,13E)-eicosatetraenoate + UDP-alpha-D-glucuronate = 15-O-(beta-D-glucuronosyl)-(5Z,8Z,11Z,14Z)-eicosatetraenoate + UDP + H(+). The catalysed reaction is 20-hydroxy-(5Z,8Z,11Z,14Z)-eicosatetraenoate + UDP-alpha-D-glucuronate = 20-O-(beta-D-glucuronosyl)-(5Z,8Z,11Z,14Z)-eicosatetraenoate + UDP + H(+). It carries out the reaction (E)-ferulate + UDP-alpha-D-glucuronate = (E)-4-O-(beta-D-glucuronosyl)-ferulate + UDP + H(+). The enzyme catalyses prostaglandin B1 + UDP-alpha-D-glucuronate = 15-O-(beta-D-glucuronosyl)-prostaglandin B1 + UDP + H(+). It catalyses the reaction mycophenolate + UDP-alpha-D-glucuronate = mycophenolic acid O-acyl-beta-D-glucuronide + UDP. The catalysed reaction is losartan + UDP-alpha-D-glucuronate = losartan-2-N-beta-D-glucuronide + UDP. It carries out the reaction candesartan + UDP-alpha-D-glucuronate = candesartan O-beta-D-glucuronoside + UDP. The enzyme catalyses candesartan + UDP-alpha-D-glucuronate = candesartan-2-N-beta-D-glucuronide + UDP. It catalyses the reaction zolasartan + UDP-alpha-D-glucuronate = zolarsartan O-beta-D-glucuronoside + UDP. UDP-glucuronosyltransferase (UGT) that catalyzes phase II biotransformation reactions in which lipophilic substrates are conjugated with glucuronic acid to increase the metabolite's water solubility, thereby facilitating excretion into either the urine or bile. Essential for the elimination and detoxification of drugs, xenobiotics and endogenous compounds. Catalyzes the glucuronidation of endogenous steroid hormones such as androgens (epitestosterone, androsterone) and estrogens (estradiol, epiestradiol, estriol, catechol estrogens). Also regulates the levels of retinoic acid, a major metabolite of vitamin A involved in apoptosis, cellular growth and differentiation, and embryonic development. Contributes to bile acid (BA) detoxification by catalyzing the glucuronidation of BA substrates, which are natural detergents for dietary lipids absorption. Involved in the glucuronidation of arachidonic acid (AA) and AA-derived eicosanoids including 15-HETE, 20-HETE, PGE2, PGB1 and F2-isoprostanes (8-iso-PGF2alpha and 5-epi-5-F2t-IsoP). Involved in the glucuronidation of the phytochemical ferulic acid at the phenolic or the carboxylic acid group. Involved in the glucuronidation of the AGTR1 angiotensin receptor antagonist losartan, caderastan and zolarsatan, drugs which can inhibit the effect of angiotensin II. Also metabolizes mycophenolate, an immunosuppressive agent. This Homo sapiens (Human) protein is UDP-glucuronosyltransferase 2B7.